Here is a 517-residue protein sequence, read N- to C-terminus: Putative succinate-semialdehyde dehydrogenase [NADP(+)] (517 aa).

Residues 157-158, 181-184, and 232-233 each bind NADP(+); these read WN, KPDS, and GS. The Proton acceptor role is filled by E254. L255 is an NADP(+) binding site. The active-site Nucleophile is C288. An NADP(+)-binding site is contributed by E386.

Belongs to the aldehyde dehydrogenase family.

It catalyses the reaction succinate semialdehyde + NADP(+) + H2O = succinate + NADPH + 2 H(+). Functionally, catalyzes the NADP(+)-dependent oxidation of succinate semialdehyde to succinate. Although it has succinate semialdehyde dehydrogenase activity, is likely to act physiologically on a different aldehyde(s). The polypeptide is Putative succinate-semialdehyde dehydrogenase [NADP(+)] (gabD2) (Mycolicibacterium smegmatis (strain ATCC 700084 / mc(2)155) (Mycobacterium smegmatis)).